Here is a 222-residue protein sequence, read N- to C-terminus: Small ribosomal subunit protein uS7m (222 aa).

A mitochondrion-targeting transit peptide spans 1 to 14 (MSKKLANFAQKRWI).

Belongs to the universal ribosomal protein uS7 family. In terms of assembly, component of the mitochondrial ribosome small subunit (28S) which comprises a 12S rRNA and about 30 distinct proteins.

The protein resides in the mitochondrion. This Caenorhabditis briggsae protein is Small ribosomal subunit protein uS7m (mrps-7).